The following is a 268-amino-acid chain: Small ribosomal subunit protein uS2 (268 aa).

The tract at residues 161–179 is laminin-binding; the sequence is IPCNNDKYSIALMLWMLAR.

Belongs to the universal ribosomal protein uS2 family. Component of the small ribosomal subunit. Mature ribosomes consist of a small (40S) and a large (60S) subunit. The 40S subunit contains about 33 different proteins and 1 molecule of RNA (18S). The 60S subunit contains about 49 different proteins and 3 molecules of RNA (28S, 5.8S and 5S). Interacts with ribosomal protein S21.

It is found in the cytoplasm. Required for the assembly and/or stability of the 40S ribosomal subunit. Required for the processing of the 20S rRNA-precursor to mature 18S rRNA in a late step of the maturation of 40S ribosomal subunits. Binds laminin. This chain is Small ribosomal subunit protein uS2 (egmo3), found in Echinococcus granulosus (Hydatid tapeworm).